An 807-amino-acid polypeptide reads, in one-letter code: Ribosomal RNA large subunit methyltransferase K/L (807 aa).

Positions 67-182 (QIYKICLWSR…EKQAEIFLDL (116 aa)) constitute a THUMP domain. The segment covering 548 to 560 (NTQYGNPEASAQS) has biased composition (polar residues). A disordered region spans residues 548–602 (NTQYGNPEASAQSKESKNAPEPKKDNRNRYKGNKFQQAREEAKRQEAQRLAQKKR). Basic and acidic residues-rich tracts occupy residues 561-575 (KESK…DNRN) and 584-594 (QAREEAKRQEA).

Belongs to the methyltransferase superfamily. RlmKL family.

Its subcellular location is the cytoplasm. It carries out the reaction guanosine(2445) in 23S rRNA + S-adenosyl-L-methionine = N(2)-methylguanosine(2445) in 23S rRNA + S-adenosyl-L-homocysteine + H(+). The catalysed reaction is guanosine(2069) in 23S rRNA + S-adenosyl-L-methionine = N(2)-methylguanosine(2069) in 23S rRNA + S-adenosyl-L-homocysteine + H(+). Functionally, specifically methylates the guanine in position 2445 (m2G2445) and the guanine in position 2069 (m7G2069) of 23S rRNA. The chain is Ribosomal RNA large subunit methyltransferase K/L from Psychrobacter sp. (strain PRwf-1).